A 299-amino-acid chain; its full sequence is MLRLFYFSAVIASVILNFVGIIMNLFITVVNCKTWVKSHRISSSDRILFSLGITRFLMLGLFLVNTIYFVSSNMERSVYLSAFFVLCFMFLDSSSLWFVTLLNILYCVKITNFQHSVFLLLKRSISPKIPRLLLAFVLISAFTTCLYITLSQASPFPELVTTRNNTSFNISEGILSLVVSLVLSSSLQFIINVTSASLLIHSLRRHIQKMQKNATGFWNPQMEAHVGAMKLMVYFLILYIPYSVATLVQYLPFYAGMDMGTKSICLIFATLYSPGHSVLIIITHPKLKTTAKKILCFKK.

The Extracellular segment spans residues 1 to 9 (MLRLFYFSA). Residues 10 to 30 (VIASVILNFVGIIMNLFITVV) traverse the membrane as a helical segment. The Cytoplasmic portion of the chain corresponds to 31–46 (NCKTWVKSHRISSSDR). A helical transmembrane segment spans residues 47-67 (ILFSLGITRFLMLGLFLVNTI). The Extracellular portion of the chain corresponds to 68–81 (YFVSSNMERSVYLS). The chain crosses the membrane as a helical span at residues 82 to 102 (AFFVLCFMFLDSSSLWFVTLL). At 103–131 (NILYCVKITNFQHSVFLLLKRSISPKIPR) the chain is on the cytoplasmic side. The chain crosses the membrane as a helical span at residues 132-152 (LLLAFVLISAFTTCLYITLSQ). Residues 153 to 172 (ASPFPELVTTRNNTSFNISE) lie on the Extracellular side of the membrane. Residues N164, N165, and N169 are each glycosylated (N-linked (GlcNAc...) asparagine). A helical membrane pass occupies residues 173–193 (GILSLVVSLVLSSSLQFIINV). Over 194–230 (TSASLLIHSLRRHIQKMQKNATGFWNPQMEAHVGAMK) the chain is Cytoplasmic. A helical membrane pass occupies residues 231–251 (LMVYFLILYIPYSVATLVQYL). The Extracellular segment spans residues 252–262 (PFYAGMDMGTK). A helical transmembrane segment spans residues 263-283 (SICLIFATLYSPGHSVLIIIT). The Cytoplasmic portion of the chain corresponds to 284–299 (HPKLKTTAKKILCFKK).

The protein belongs to the G-protein coupled receptor T2R family.

The protein resides in the membrane. Its subcellular location is the cell projection. The protein localises to the cilium membrane. Its function is as follows. Gustducin-coupled receptor implicated in the perception of bitter compounds in the oral cavity and the gastrointestinal tract. Signals through PLCB2 and the calcium-regulated cation channel TRPM5. In airway epithelial cells, binding of denatonium increases the intracellular calcium ion concentration and stimulates ciliary beat frequency. The chain is Taste receptor type 2 member 4 (TAS2R4) from Gorilla gorilla gorilla (Western lowland gorilla).